The following is a 223-amino-acid chain: Ribosomal RNA small subunit methyltransferase Nep1 (223 aa).

Residues G181, G186, and 199 to 204 (LYREPL) contribute to the S-adenosyl-L-methionine site.

Belongs to the class IV-like SAM-binding methyltransferase superfamily. RNA methyltransferase NEP1 family. Homodimer.

The catalysed reaction is a pseudouridine in rRNA + S-adenosyl-L-methionine = an N(1)-methylpseudouridine in rRNA + S-adenosyl-L-homocysteine + H(+). Functionally, methyltransferase involved in ribosomal biogenesis. Specifically catalyzes the N1-methylation of the pseudouridine corresponding to position 914 in M.jannaschii 16S rRNA. This is Ribosomal RNA small subunit methyltransferase Nep1 from Pyrococcus furiosus (strain ATCC 43587 / DSM 3638 / JCM 8422 / Vc1).